The chain runs to 20 residues: Magnificalysin I (20 aa).

Residues 1–10 form a plays an important role in the hemolytic activity region; it reads ALAGTIIAGA. The interval 9–20 is N-terminal region; the sequence is GASLTFKILDEV.

This sequence belongs to the actinoporin family. Sea anemone subfamily. Octamer or nonamer in membranes. Monomer in the soluble state.

It localises to the secreted. The protein resides in the nematocyst. Its subcellular location is the target cell membrane. Functionally, pore-forming protein that forms cations-selective hydrophilic pores of around 1 nm and causes cytolysis. Pore formation is a multi-step process that involves specific recognition of membrane sphingomyelin (but neither cholesterol nor phosphatidylcholine) using aromatic rich region and adjacent phosphocholine (POC) binding site, firm binding to the membrane (mainly driven by hydrophobic interactions) accompanied by the transfer of the N-terminal region to the lipid-water interface and finally pore formation after oligomerization of monomers. This is Magnificalysin I from Heteractis magnifica (Magnificent sea anemone).